The sequence spans 102 residues: Transposable element activator uncharacterized 12 kDa protein (102 aa).

Basic residues predominate over residues 24-51 (HNHNQNHNHSHNLNPKKKHHRRGQRSAH). The interval 24–55 (HNHNQNHNHSHNLNPKKKHHRRGQRSAHRMYG) is disordered.

This Zea mays (Maize) protein is Transposable element activator uncharacterized 12 kDa protein.